The chain runs to 436 residues: L-threonine dehydratase biosynthetic IlvA (436 aa).

Residues 1-357 are catalytic; the sequence is MSETYVSEKS…HRGLKHYFLV (357 aa). Lysine 70 is subject to N6-(pyridoxal phosphate)lysine. Residues asparagine 97, 203–207, and serine 329 contribute to the pyridoxal 5'-phosphate site; that span reads GGGGL. The ACT-like domain maps to 353–427; that stretch reads HYFLVNFPQK…SAIDSRRLEP (75 aa). The tract at residues 358–436 is regulatory; the sequence is NFPQKPGQLR…PGTPEYEYLT (79 aa).

Belongs to the serine/threonine dehydratase family. As to quaternary structure, homotetramer. Requires pyridoxal 5'-phosphate as cofactor.

It carries out the reaction L-threonine = 2-oxobutanoate + NH4(+). Its pathway is amino-acid biosynthesis; L-isoleucine biosynthesis; 2-oxobutanoate from L-threonine: step 1/1. Its function is as follows. Catalyzes the anaerobic formation of alpha-ketobutyrate and ammonia from threonine in a two-step reaction. The first step involved a dehydration of threonine and a production of enamine intermediates (aminocrotonate), which tautomerizes to its imine form (iminobutyrate). Both intermediates are unstable and short-lived. The second step is the nonenzymatic hydrolysis of the enamine/imine intermediates to form 2-ketobutyrate and free ammonia. In the low water environment of the cell, the second step is accelerated by RidA. This Corynebacterium glutamicum (strain ATCC 13032 / DSM 20300 / JCM 1318 / BCRC 11384 / CCUG 27702 / LMG 3730 / NBRC 12168 / NCIMB 10025 / NRRL B-2784 / 534) protein is L-threonine dehydratase biosynthetic IlvA (ilvA).